A 184-amino-acid chain; its full sequence is Interferon alpha-2 (184 aa).

The N-terminal stretch at 1 to 23 (MALPFSLLMALVVLSCHSSCSLG) is a signal peptide. 2 disulfides stabilise this stretch: Cys24/Cys122 and Cys52/Cys162.

It belongs to the alpha/beta interferon family. Interacts with IFNAR2.

Its subcellular location is the secreted. In terms of biological role, produced by macrophages, IFN-alpha have antiviral activities. This chain is Interferon alpha-2, found in Equus caballus (Horse).